The sequence spans 206 residues: Large ribosomal subunit protein uL3 (206 aa).

Belongs to the universal ribosomal protein uL3 family. Part of the 50S ribosomal subunit. Forms a cluster with proteins L14 and L19.

Functionally, one of the primary rRNA binding proteins, it binds directly near the 3'-end of the 23S rRNA, where it nucleates assembly of the 50S subunit. In Thermus thermophilus (strain ATCC BAA-163 / DSM 7039 / HB27), this protein is Large ribosomal subunit protein uL3.